A 924-amino-acid polypeptide reads, in one-letter code: Ubiquitin carboxyl-terminal hydrolase 5 (924 aa).

The region spanning 15–145 is the DUSP domain; that stretch reads LSPEEERVFI…GPTLARRVIS (131 aa). Residues 64 to 83 are compositionally biased toward polar residues; that stretch reads TNDGSSLSEHCDSPGSSTLK. The segment at 64–87 is disordered; the sequence is TNDGSSLSEHCDSPGSSTLKKPSR. In terms of domain architecture, USP spans 317–916; sequence TGLLNLGNTC…AAYVLFYRRK (600 aa). C326 acts as the Nucleophile in catalysis. Basic and acidic residues predominate over residues 648–667; it reads REESVGKKGNSDSSIPERRS. The segment at 648 to 690 is disordered; the sequence is REESVGKKGNSDSSIPERRSARFNNTEEEDKVGGLKKAKKSNS. H874 functions as the Proton acceptor in the catalytic mechanism.

It belongs to the peptidase C19 family.

The enzyme catalyses Thiol-dependent hydrolysis of ester, thioester, amide, peptide and isopeptide bonds formed by the C-terminal Gly of ubiquitin (a 76-residue protein attached to proteins as an intracellular targeting signal).. Functionally, recognizes and hydrolyzes the peptide bond at the C-terminal Gly of ubiquitin. Involved in the processing of poly-ubiquitin precursors as well as that of ubiquitinated proteins. This Arabidopsis thaliana (Mouse-ear cress) protein is Ubiquitin carboxyl-terminal hydrolase 5 (UBP5).